A 463-amino-acid chain; its full sequence is Zinc finger protein PLAGL1 (463 aa).

C2H2-type zinc fingers lie at residues 4-26, 32-56, 62-84, 91-113, 120-142, 156-178, and 184-207; these read YPCQ…NYSH, YKCL…MATH, HQCA…LQTH, FGCE…LALH, LTCG…LKAH, HQCD…LVVH, and FLCQ…KKTH. The segment at 285 to 310 is disordered; the sequence is LHPVAPPTSPPQPLQNHKYNTSSTSY. Over residues 287–297 the composition is skewed to pro residues; sequence PVAPPTSPPQP. Residues 298-310 show a composition bias toward polar residues; sequence LQNHKYNTSSTSY.

The protein belongs to the krueppel C2H2-type zinc-finger protein family. As to quaternary structure, interacts with THRSP.

It is found in the nucleus. Its function is as follows. Acts as a transcriptional activator. Involved in the transcriptional regulation of type 1 receptor for pituitary adenylate cyclase-activating polypeptide. The chain is Zinc finger protein PLAGL1 (PLAGL1) from Sus scrofa (Pig).